Here is a 65-residue protein sequence, read N- to C-terminus: Large ribosomal subunit protein bL35 (65 aa).

Basic residues-rich tracts occupy residues 1–16 (MPKMKTHRASAKRFKK) and 31–45 (HRFHGKTKKQRRQLR). The segment at 1-47 (MPKMKTHRASAKRFKKTANGGLKSASAYTSHRFHGKTKKQRRQLRGT) is disordered.

Belongs to the bacterial ribosomal protein bL35 family.

The sequence is that of Large ribosomal subunit protein bL35 from Leuconostoc citreum (strain KM20).